The primary structure comprises 1139 residues: Autophagy-related protein 23 (1139 aa).

9 disordered regions span residues Met-1–Pro-148, Ser-225–Glu-327, Leu-356–Asp-388, Lys-475–Gly-569, Lys-648–Tyr-674, Arg-720–Glu-767, Glu-786–Arg-828, Ala-935–Leu-961, and His-977–Thr-1012. The span at Ser-7–Ala-18 shows a compositional bias: basic and acidic residues. The span at Arg-19–Ser-37 shows a compositional bias: low complexity. Coiled coils occupy residues Lys-142–Ser-170 and Asp-215–Gln-259. Basic and acidic residues-rich tracts occupy residues Ser-225–Glu-247, Lys-261–Asp-273, Ala-373–Ser-385, and Lys-475–Ser-494. Positions Ser-323–Lys-495 form a coiled coil. Residues Pro-496 to Ala-522 show a composition bias toward low complexity. The segment covering Gly-526–Lys-537 has biased composition (basic residues). Residues Asp-566–Ser-1067 are a coiled coil. Residues Ser-651–Ser-661 show a composition bias toward low complexity. 4 stretches are compositionally biased toward basic and acidic residues: residues Ala-728–Glu-767, Glu-786–Gln-815, Ala-935–Asp-945, and His-977–Arg-1011. One can recognise a GRIP domain in the interval Ser-1082 to Ala-1132.

It belongs to the ATG23 family. As to quaternary structure, forms a complex with ATG9 and ATG27.

It is found in the cytoplasm. It localises to the preautophagosomal structure membrane. Functionally, required for cytoplasm to vacuole transport (Cvt) vesicle formation and efficient autophagy. Plays a role in ATG protein retrieval from the pre-autophagosomal structure (PAS) and is especially required for autophagy-dependent cycling of ATG9. Autophagy is required for proper vegetative growth, asexual/sexual reproduction, and full virulence. Autophagy is particularly involved in the biosynthesis of deoxynivalenol (DON), an important virulence determinant. In Gibberella zeae (strain ATCC MYA-4620 / CBS 123657 / FGSC 9075 / NRRL 31084 / PH-1) (Wheat head blight fungus), this protein is Autophagy-related protein 23.